We begin with the raw amino-acid sequence, 274 residues long: 3-methyl-2-oxobutanoate hydroxymethyltransferase (274 aa).

The Mg(2+) site is built by aspartate 49 and aspartate 88. Residues aspartate 49–serine 50, aspartate 88, and lysine 118 contribute to the 3-methyl-2-oxobutanoate site. Glutamate 120 serves as a coordination point for Mg(2+). The active-site Proton acceptor is glutamate 187.

It belongs to the PanB family. In terms of assembly, homodecamer; pentamer of dimers. The cofactor is Mg(2+).

It is found in the cytoplasm. It catalyses the reaction 3-methyl-2-oxobutanoate + (6R)-5,10-methylene-5,6,7,8-tetrahydrofolate + H2O = 2-dehydropantoate + (6S)-5,6,7,8-tetrahydrofolate. Its pathway is cofactor biosynthesis; (R)-pantothenate biosynthesis; (R)-pantoate from 3-methyl-2-oxobutanoate: step 1/2. Catalyzes the reversible reaction in which hydroxymethyl group from 5,10-methylenetetrahydrofolate is transferred onto alpha-ketoisovalerate to form ketopantoate. The protein is 3-methyl-2-oxobutanoate hydroxymethyltransferase of Rhodopseudomonas palustris (strain HaA2).